Reading from the N-terminus, the 291-residue chain is Small ribosomal subunit biogenesis GTPase RsgA (291 aa).

The CP-type G domain occupies 63-221; the sequence is ENELKRPPVS…IADTPGFSAL (159 aa). GTP is bound by residues 112–115 and 164–172; these read TKKD and GQSGVGKST. The Zn(2+) site is built by Cys-245, Cys-250, His-252, and Cys-258.

This sequence belongs to the TRAFAC class YlqF/YawG GTPase family. RsgA subfamily. As to quaternary structure, monomer. Associates with 30S ribosomal subunit, binds 16S rRNA. The cofactor is Zn(2+).

Its subcellular location is the cytoplasm. Functionally, one of several proteins that assist in the late maturation steps of the functional core of the 30S ribosomal subunit. Helps release RbfA from mature subunits. May play a role in the assembly of ribosomal proteins into the subunit. Circularly permuted GTPase that catalyzes slow GTP hydrolysis, GTPase activity is stimulated by the 30S ribosomal subunit. The protein is Small ribosomal subunit biogenesis GTPase RsgA of Staphylococcus aureus (strain COL).